Reading from the N-terminus, the 437-residue chain is tRNA-2-methylthio-N(6)-dimethylallyladenosine synthase (437 aa).

Residues 1–115 enclose the MTTase N-terminal domain; it reads MKVYIETMGC…ISQVIHKEKA (115 aa). Residues Cys10, Cys46, Cys78, Cys148, Cys152, and Cys155 each contribute to the [4Fe-4S] cluster site. The Radical SAM core domain maps to 134–367; sequence KKAQIRSLLN…QNRHKEILEE (234 aa). Positions 370-436 constitute a TRAM domain; that stretch reads KLEVGKTHVV…KGRLMATTKG (67 aa).

Belongs to the methylthiotransferase family. MiaB subfamily. Monomer. The cofactor is [4Fe-4S] cluster.

The protein localises to the cytoplasm. It catalyses the reaction N(6)-dimethylallyladenosine(37) in tRNA + (sulfur carrier)-SH + AH2 + 2 S-adenosyl-L-methionine = 2-methylsulfanyl-N(6)-dimethylallyladenosine(37) in tRNA + (sulfur carrier)-H + 5'-deoxyadenosine + L-methionine + A + S-adenosyl-L-homocysteine + 2 H(+). Catalyzes the methylthiolation of N6-(dimethylallyl)adenosine (i(6)A), leading to the formation of 2-methylthio-N6-(dimethylallyl)adenosine (ms(2)i(6)A) at position 37 in tRNAs that read codons beginning with uridine. This chain is tRNA-2-methylthio-N(6)-dimethylallyladenosine synthase, found in Helicobacter pylori (strain G27).